The sequence spans 65 residues: UPF0434 protein Rpal_0270 (65 aa).

This sequence belongs to the UPF0434 family.

In Rhodopseudomonas palustris (strain TIE-1), this protein is UPF0434 protein Rpal_0270.